Here is a 293-residue protein sequence, read N- to C-terminus: N-acetylmannosamine kinase (293 aa).

ATP is bound by residues 5–12 (AIDIGGTK) and 133–140 (GVGGGLVI). Zn(2+)-binding residues include His-157, Cys-167, Cys-169, and Cys-174.

Belongs to the ROK (NagC/XylR) family. NanK subfamily. In terms of assembly, homodimer.

It catalyses the reaction an N-acyl-D-mannosamine + ATP = an N-acyl-D-mannosamine 6-phosphate + ADP + H(+). It participates in amino-sugar metabolism; N-acetylneuraminate degradation; D-fructose 6-phosphate from N-acetylneuraminate: step 2/5. In terms of biological role, catalyzes the phosphorylation of N-acetylmannosamine (ManNAc) to ManNAc-6-P. This chain is N-acetylmannosamine kinase, found in Vibrio vulnificus (strain CMCP6).